A 201-amino-acid chain; its full sequence is Retinol-binding protein 4 (201 aa).

The first 18 residues, 1–18, serve as a signal peptide directing secretion; sequence MEWVWALVLLAALGGGSA. 3 disulfides stabilise this stretch: cysteine 22/cysteine 178, cysteine 88/cysteine 192, and cysteine 138/cysteine 147. Glutamine 116 contributes to the substrate binding site. Residue arginine 139 is modified to Omega-N-methylarginine.

Belongs to the calycin superfamily. Lipocalin family. As to quaternary structure, interacts with TTR. Interaction with TTR prevents its loss by filtration through the kidney glomeruli. Interacts with STRA6. In terms of tissue distribution, detected in blood plasma (at protein level).

The protein resides in the secreted. Retinol-binding protein that mediates retinol transport in blood plasma. Delivers retinol from the liver stores to the peripheral tissues. Transfers the bound all-trans retinol to STRA6, that then facilitates retinol transport across the cell membrane. The protein is Retinol-binding protein 4 (Rbp4) of Rattus norvegicus (Rat).